A 709-amino-acid polypeptide reads, in one-letter code: MPGIDKLPIEETLEDSPQTRSLLGVFEEDATAISNYMNQLYQAMHRIYDAQNELSAATHLTSKLLKEYEKQRFPLGGDDEVMSSTLQQFSKVIDELSSCHAVLSTQLADAMMFPITQFKERDLKEILTLKEVFQIASNDHDAAINRYSRLSKKRENDKVKYEVTEDVYTSRKKQHQTMMHYFCALNTLQYKKKIALLEPLLGYMQAQISFFKMGSENLNEQLEEFLANIGTSVQNVRREMDSDIETMQQTIEDLEVASDPLYVPDPDPTKFPVNRNLTRKAGYLNARNKTGLVSSTWDRQFYFTQGGNLMSQARGDVAGGLAMDIDNCSVMAVDCEDRRYCFQITSFDGKKSSILQAESKKDHEEWICTINNISKQIYLSENPEETAARVNQSALEAVTPSPSFQQRHESLRPAAGQSRPPTARTSSSGSLGSESTNLAALSLDSLVAPDTPIQFDIISPVCEDQPGQAKAFGQGGRRTNPFGESGGSTKSETEDSILHQLFIVRFLGSMEVKSDDHPDVVYETMRQILAARAIHNIFRMTESHLLVTCDCLKLIDPQTQVTRLTFPLPCVVLYATHQENKRLFGFVLRTSSGRSESNLSSVCYIFESNNEGEKICDSVGLAKQIALHAELDRRASEKQKEIERVKEKQQKELNKQKQIEKDLEEQSRLIAASSRPNQASSEGQFVVLSSSQSEESDLGEGGKKRESEA.

The required for RAB5A binding stretch occupies residues 1 to 428; it reads MPGIDKLPIE…RPPTARTSSS (428 aa). The 266-residue stretch at 3–268 folds into the BAR domain; sequence GIDKLPIEET…DPLYVPDPDP (266 aa). Positions 215–259 form a coiled coil; sequence SENLNEQLEEFLANIGTSVQNVRREMDSDIETMQQTIEDLEVASD. The PH domain maps to 277–375; that stretch reads LTRKAGYLNA…WICTINNISK (99 aa). Disordered regions lie at residues 397-434, 467-491, and 645-709; these read AVTPSPSFQQRHESLRPAAGQSRPPTARTSSSGSLGSE, GQAKAFGQGGRRTNPFGESGGSTKS, and VKEK…ESEA. T399 bears the Phosphothreonine mark. Phosphoserine is present on S401. A F&amp;H motif is present at residues 403–414; that stretch reads SFQQRHESLRPA. S410 is subject to Phosphoserine; by PKA. Residues 496-656 form the PID domain; sequence SILHQLFIVR…EKQQKELNKQ (161 aa). Positions 621–673 form a coiled coil; that stretch reads LAKQIALHAELDRRASEKQKEIERVKEKQQKELNKQKQIEKDLEEQSRLIAAS. Residues 645-667 are compositionally biased toward basic and acidic residues; it reads VKEKQQKELNKQKQIEKDLEEQS. The span at 674 to 693 shows a compositional bias: polar residues; it reads SRPNQASSEGQFVVLSSSQS. Residues S693 and S696 each carry the phosphoserine modification. The segment covering 700–709 has biased composition (basic and acidic residues); it reads EGGKKRESEA.

As to quaternary structure, homodimer. Binds RAB5A/Rab5 through an N-terminal domain. This interaction is essential for its recruitment to endosomal membranes as well as its role in cell proliferation. Binds DCC and the catalytic domain of the inactive form of AKT2 through its PID domain. Binds PIK3CA and subunits of the NuRD/MeCP1 complex. Interacts with OCRL and INPP5B. Interacts with NTRK2. Interacts with APPL2; interaction is independent of follicle stimulating hormone stimulation; interaction is decreased by adiponectin in a time-dependent manner. Forms a complex with APPL2 and RUVBL2. Forms a complex comprising APPL2, RUVBL2, CTNNB1, HDAC1 and HDAC2; interaction reduces interaction between CTNNB1, HDAC1, HDAC2 and RUVBL2 leading to the decrease of deacetylase activity of this complex; affects the recruitment of repressive complexes to the Wnt target genes. Interacts with ANXA2. Interacts with TGFBR1; interaction is TGF beta dependent; mediates trafficking of the TGFBR1 from the endosomes to the nucleus via microtubules in a TRAF6-dependent manner. Interacts with PRKCZ. Interacts with PIK3R1 and APPL2. Interacts with ADIPOR1; ADIPOQ enhances this interaction; inhibites adiponectin-stimulated binding of APPL2 to ADIPOR1. Phosphorylation at Ser-410 by PKA severely impairs binding to OCRL. In terms of tissue distribution, high levels in heart, ovary, pancreas and skeletal muscle.

It is found in the early endosome membrane. The protein localises to the nucleus. Its subcellular location is the cytoplasm. The protein resides in the endosome. It localises to the cell projection. It is found in the ruffle. The protein localises to the cytoplasmic vesicle. Its subcellular location is the phagosome. Functionally, multifunctional adapter protein that binds to various membrane receptors, nuclear factors and signaling proteins to regulate many processes, such as cell proliferation, immune response, endosomal trafficking and cell metabolism. Regulates signaling pathway leading to cell proliferation through interaction with RAB5A and subunits of the NuRD/MeCP1 complex. Functions as a positive regulator of innate immune response via activation of AKT1 signaling pathway by forming a complex with APPL1 and PIK3R1. Inhibits Fc-gamma receptor-mediated phagocytosis through PI3K/Akt signaling in macrophages. Regulates TLR4 signaling in activated macrophages. Involved in trafficking of the TGFBR1 from the endosomes to the nucleus via microtubules in a TRAF6-dependent manner. Plays a role in cell metabolism by regulating adiponecting and insulin signaling pathways. Required for fibroblast migration through HGF cell signaling. Positive regulator of beta-catenin/TCF-dependent transcription through direct interaction with RUVBL2/reptin resulting in the relief of RUVBL2-mediated repression of beta-catenin/TCF target genes by modulating the interactions within the beta-catenin-reptin-HDAC complex. In Homo sapiens (Human), this protein is DCC-interacting protein 13-alpha.